A 181-amino-acid polypeptide reads, in one-letter code: Lysozyme C (181 aa).

Positions 1–19 (MRIAFFLLILSIIVGLAYG) are cleaved as a signal peptide. A propeptide spanning residues 139–181 (LTDSRPLGPFNVTEEEMDQLFIDHEIAMAQCEAEKTCNGFDLE) is cleaved from the precursor.

The protein belongs to the dictyostelium lysozyme family. In terms of processing, contains six disulfide bonds.

It is found in the cytoplasmic vesicle lumen. It carries out the reaction Hydrolysis of (1-&gt;4)-beta-linkages between N-acetylmuramic acid and N-acetyl-D-glucosamine residues in a peptidoglycan and between N-acetyl-D-glucosamine residues in chitodextrins.. Its function is as follows. Has antibacterial activity. The polypeptide is Lysozyme C (alyC) (Dictyostelium discoideum (Social amoeba)).